Here is a 488-residue protein sequence, read N- to C-terminus: Altronate oxidoreductase (488 aa).

18–29 (VIQFGEGNFLRA) serves as a coordination point for NAD(+).

This sequence belongs to the mannitol dehydrogenase family. UxaB subfamily.

The enzyme catalyses D-altronate + NAD(+) = keto-D-tagaturonate + NADH + H(+). It functions in the pathway carbohydrate metabolism; pentose and glucuronate interconversion. In Pectobacterium atrosepticum (strain SCRI 1043 / ATCC BAA-672) (Erwinia carotovora subsp. atroseptica), this protein is Altronate oxidoreductase.